A 94-amino-acid chain; its full sequence is uncharacterized protein (94 aa).

An HTH cro/C1-type domain is found at 13–67 (IQESLDELNVSLREFARAMEIAPSTASRLLTGKAALTPEMAIKLSVVIGSSPQMW). Residues 24–43 (LREFARAMEIAPSTASRLLT) constitute a DNA-binding region (H-T-H motif).

It belongs to the VapA/VapI family.

This is an uncharacterized protein from Escherichia coli (strain K12).